A 508-amino-acid polypeptide reads, in one-letter code: Photosystem II CP47 reaction center protein (508 aa).

6 consecutive transmembrane segments (helical) span residues 21–36 (SVHI…WAGS), 101–115 (IVFS…IWHW), 140–156 (GIHL…FGAF), 203–218 (IAAG…FHLS), 237–252 (VLSS…AFVV), and 457–472 (SFAL…HGAR).

This sequence belongs to the PsbB/PsbC family. PsbB subfamily. As to quaternary structure, PSII is composed of 1 copy each of membrane proteins PsbA, PsbB, PsbC, PsbD, PsbE, PsbF, PsbH, PsbI, PsbJ, PsbK, PsbL, PsbM, PsbT, PsbX, PsbY, PsbZ, Psb30/Ycf12, at least 3 peripheral proteins of the oxygen-evolving complex and a large number of cofactors. It forms dimeric complexes. Binds multiple chlorophylls. PSII binds additional chlorophylls, carotenoids and specific lipids. serves as cofactor.

The protein localises to the plastid. It localises to the chloroplast thylakoid membrane. Its function is as follows. One of the components of the core complex of photosystem II (PSII). It binds chlorophyll and helps catalyze the primary light-induced photochemical processes of PSII. PSII is a light-driven water:plastoquinone oxidoreductase, using light energy to abstract electrons from H(2)O, generating O(2) and a proton gradient subsequently used for ATP formation. The chain is Photosystem II CP47 reaction center protein from Nymphaea alba (White water-lily).